Consider the following 1083-residue polypeptide: Ubiquitin carboxyl-terminal hydrolase 1 (1083 aa).

Residues 30–165 (RSCVHFDKYV…KKDLLLEVVK (136 aa)) form a UBP-type zinc finger. The Zn(2+) site is built by cysteine 32, histidine 34, cysteine 56, cysteine 59, cysteine 95, cysteine 98, cysteine 103, histidine 115, histidine 119, histidine 125, cysteine 139, and cysteine 142. The 882-residue stretch at 202 to 1083 (RGLVNLGNTC…EAYILFYERI (882 aa)) folds into the USP domain. Cysteine 211 acts as the Nucleophile in catalysis. 2 disordered regions span residues 387–424 (KDSEVVSAKPASDHNSTVPLFPSDHKIQSRPETSDNET) and 450–486 (GSTETLMHDNDRTGKTVPDKEDVRATQSNEETSASGI). Composition is skewed to basic and acidic residues over residues 409–419 (SDHKIQSRPET) and 455–473 (LMHDNDRTGKTVPDKEDVR). The segment covering 474–485 (ATQSNEETSASG) has biased composition (polar residues). Histidine 1029 functions as the Proton acceptor in the catalytic mechanism.

The protein belongs to the peptidase C19 family.

It catalyses the reaction Thiol-dependent hydrolysis of ester, thioester, amide, peptide and isopeptide bonds formed by the C-terminal Gly of ubiquitin (a 76-residue protein attached to proteins as an intracellular targeting signal).. Its function is as follows. Recognizes and hydrolyzes the peptide bond at the C-terminal Gly of ubiquitin. Involved in the processing of poly-ubiquitin precursors as well as that of ubiquitinated proteins. Is involved in resistance to the arginine analog canavanine (CAN). In Arabidopsis thaliana (Mouse-ear cress), this protein is Ubiquitin carboxyl-terminal hydrolase 1 (UBP1).